A 253-amino-acid chain; its full sequence is E3 ubiquitin-protein ligase MARCHF3 (253 aa).

The RING-CH-type zinc-finger motif lies at serine 63–glutamate 123. 8 residues coordinate Zn(2+): cysteine 71, cysteine 74, cysteine 87, cysteine 89, histidine 97, cysteine 100, cysteine 113, and cysteine 116. Helical transmembrane passes span leucine 145–leucine 165 and alanine 182–valine 202. Serine 237 and serine 243 each carry phosphoserine.

In terms of assembly, interacts with MARCHF2 and STX6.

Its subcellular location is the cytoplasmic vesicle membrane. The protein resides in the early endosome membrane. It carries out the reaction S-ubiquitinyl-[E2 ubiquitin-conjugating enzyme]-L-cysteine + [acceptor protein]-L-lysine = [E2 ubiquitin-conjugating enzyme]-L-cysteine + N(6)-ubiquitinyl-[acceptor protein]-L-lysine.. The protein operates within protein modification; protein ubiquitination. Its function is as follows. E3 ubiquitin-protein ligase which may be involved in endosomal trafficking. E3 ubiquitin ligases accept ubiquitin from an E2 ubiquitin-conjugating enzyme in the form of a thioester and then directly transfer the ubiquitin to targeted substrates. The chain is E3 ubiquitin-protein ligase MARCHF3 (MARCHF3) from Bos taurus (Bovine).